A 305-amino-acid polypeptide reads, in one-letter code: Methionyl-tRNA formyltransferase (305 aa).

A (6S)-5,6,7,8-tetrahydrofolate-binding site is contributed by 111 to 114 (SLLP).

This sequence belongs to the Fmt family.

The catalysed reaction is L-methionyl-tRNA(fMet) + (6R)-10-formyltetrahydrofolate = N-formyl-L-methionyl-tRNA(fMet) + (6S)-5,6,7,8-tetrahydrofolate + H(+). Attaches a formyl group to the free amino group of methionyl-tRNA(fMet). The formyl group appears to play a dual role in the initiator identity of N-formylmethionyl-tRNA by promoting its recognition by IF2 and preventing the misappropriation of this tRNA by the elongation apparatus. The chain is Methionyl-tRNA formyltransferase from Helicobacter pylori (strain J99 / ATCC 700824) (Campylobacter pylori J99).